Consider the following 269-residue polypeptide: tRNA pseudouridine synthase A (269 aa).

The active-site Nucleophile is the Asp51. Residue Tyr109 participates in substrate binding.

This sequence belongs to the tRNA pseudouridine synthase TruA family. Homodimer.

It catalyses the reaction uridine(38/39/40) in tRNA = pseudouridine(38/39/40) in tRNA. Functionally, formation of pseudouridine at positions 38, 39 and 40 in the anticodon stem and loop of transfer RNAs. This Aeromonas salmonicida (strain A449) protein is tRNA pseudouridine synthase A.